Reading from the N-terminus, the 337-residue chain is Protein-methionine-sulfoxide reductase catalytic subunit MsrP (337 aa).

The tat-type signal signal peptide spans 1–54 (MLIKLPRSSECKASEITPEGIYLSRRTLLGGSLAGLALGALPGGVGAAQMSRYA). Mo-molybdopterin contacts are provided by residues N94, 97–98 (YE), C152, T187, N237, R242, and 253–255 (SIK).

Belongs to the MsrP family. As to quaternary structure, heterodimer of a catalytic subunit (MsrP) and a heme-binding subunit (MsrQ). It depends on Mo-molybdopterin as a cofactor. In terms of processing, predicted to be exported by the Tat system. The position of the signal peptide cleavage has not been experimentally proven.

It is found in the periplasm. The catalysed reaction is L-methionyl-[protein] + a quinone + H2O = L-methionyl-(S)-S-oxide-[protein] + a quinol. It carries out the reaction L-methionyl-[protein] + a quinone + H2O = L-methionyl-(R)-S-oxide-[protein] + a quinol. Part of the MsrPQ system that repairs oxidized periplasmic proteins containing methionine sulfoxide residues (Met-O), using respiratory chain electrons. Thus protects these proteins from oxidative-stress damage caused by reactive species of oxygen and chlorine generated by the host defense mechanisms. MsrPQ is essential for the maintenance of envelope integrity under bleach stress, rescuing a wide series of structurally unrelated periplasmic proteins from methionine oxidation. The catalytic subunit MsrP is non-stereospecific, being able to reduce both (R-) and (S-) diastereoisomers of methionine sulfoxide. This is Protein-methionine-sulfoxide reductase catalytic subunit MsrP from Pseudomonas putida (strain ATCC 47054 / DSM 6125 / CFBP 8728 / NCIMB 11950 / KT2440).